We begin with the raw amino-acid sequence, 272 residues long: 3-keto-5-aminohexanoate cleavage enzyme (272 aa).

Residue glutamate 15 coordinates (5S)-5-amino-3-oxohexanoate. Histidine 47 and histidine 49 together coordinate Zn(2+). 3 residues coordinate (5S)-5-amino-3-oxohexanoate: serine 83, glycine 86, and threonine 107. Position 226 (glutamate 226) interacts with Zn(2+).

It belongs to the BKACE family. Kce subfamily. Homotetramer. Requires Zn(2+) as cofactor.

The catalysed reaction is (5S)-5-amino-3-oxohexanoate + acetyl-CoA = (3S)-3-aminobutanoyl-CoA + acetoacetate. Its pathway is amino-acid degradation; L-lysine degradation via acetate pathway. With respect to regulation, 3-fold increase in activity by addition of 10 mM 2-mercaptoethanol. Addition of CoCl(2) and to a lesser extent MnCl(2) increases the activity but not MgCl(2). Inhibited by phosphate buffer but not by 5,5'-dithio-2-nitrobenzoic acid. Involved in the anaerobic fermentation of lysine. Catalyzes the reversible reaction between 3-keto-5-aminohexanoate (KAH) and acetyl-CoA to form 3-aminobutyryl-CoA and acetoacetate. The reaction involves the deprotonation of KAH, the nucleophilic addition onto acetyl-CoA and the intramolecular transfer of the CoA moiety. It can also use beta-alanyl-CoA as substrate. The chain is 3-keto-5-aminohexanoate cleavage enzyme from Fusobacterium nucleatum subsp. nucleatum (strain ATCC 25586 / DSM 15643 / BCRC 10681 / CIP 101130 / JCM 8532 / KCTC 2640 / LMG 13131 / VPI 4355).